The primary structure comprises 567 residues: MEQRSAETRIVEALLERRRLKDTDLVRARQLQAESGMGLLALLGRLGLVSERDHAETCAEVLGLPLVDARQLGDTPPEMLPEVQGLSLRFLKQFHLCPVGERDGRLDLWIADPYDDYAIDAVRLATGLPLLLQVGLRSEIDDLIERWYGQGRSAMGTIVETADGDASSTDDIEALRDLASEAPVIRLVNLVIQHAVELRASDIHIEPFESRLKVRYRVDGVLVEGESPPAKLTAAVISRIKIMAKLNIAERRLPQDGRIMLRVQGKELDLRVSTVPTAHGESVVMRLLDRETVVFDFYKLGFTEDFLPQFRKVLEQPHGIMLVTGPTGSGKTTTLYTALSQLNTSDVKIITVEDPVEYQIEGINQIQAKPQIGLDFANALRSIVRQDPDIIMIGEMRDLETARIAIQSALTGHLVLSTLHTNNAAGGITRLLDMGVEDYLLTSTINGILAQRLVRKLDLANAERYAASPEEIERFDLRRLQPDGEIFLYRPRATAAAPTGYLGRTTIVEFLVMNDELRRAVMRRAGMGEIEQLARKSGMRTMYEDGLSKALRGETTIEEVLRVTEDA.

325-332 lines the ATP pocket; the sequence is GPTGSGKT.

Belongs to the GSP E family. In terms of assembly, forms homooligomers; most probably hexamers. Interacts with XpsL/GspL.

The protein resides in the cell inner membrane. It carries out the reaction ATP + H2O + cellular proteinSide 1 = ADP + phosphate + cellular proteinSide 2.. In terms of biological role, ATPase component of the type II secretion system required for the energy-dependent secretion of extracellular factors such as proteases and toxins from the periplasm. Acts as a molecular motor to provide the energy that is required for assembly of the pseudopilus and the extrusion of substrates generated in the cytoplasm. This chain is Type II secretion system protein E (xpsE), found in Xanthomonas campestris pv. campestris (strain ATCC 33913 / DSM 3586 / NCPPB 528 / LMG 568 / P 25).